The primary structure comprises 164 residues: R-phycoerythrin alpha chain (164 aa).

2 residues coordinate (2R,3E)-phycoerythrobilin: Cys82 and Cys139.

The protein belongs to the phycobiliprotein family. In terms of assembly, heterodimer of an alpha and a beta chain. Post-translationally, contains two covalently linked bilin chromophores.

It localises to the plastid. The protein localises to the chloroplast thylakoid membrane. In terms of biological role, light-harvesting photosynthetic bile pigment-protein from the phycobiliprotein complex. In Porphyra purpurea (Red seaweed), this protein is R-phycoerythrin alpha chain (cpeA).